A 186-amino-acid polypeptide reads, in one-letter code: uncharacterized protein (186 aa).

Helical transmembrane passes span 42-62 (ISIA…LSVL), 80-100 (LLFL…IGLV), and 131-151 (ICGI…FIVL).

This sequence to U.parvum UU008, UU041 and UU042.

The protein resides in the cell membrane. This is an uncharacterized protein from Ureaplasma parvum serovar 3 (strain ATCC 700970).